Consider the following 197-residue polypeptide: ATP-dependent Clp protease proteolytic subunit (197 aa).

The active-site Nucleophile is the Ser-98. His-123 is an active-site residue.

Belongs to the peptidase S14 family. In terms of assembly, fourteen ClpP subunits assemble into 2 heptameric rings which stack back to back to give a disk-like structure with a central cavity, resembling the structure of eukaryotic proteasomes.

It is found in the cytoplasm. The enzyme catalyses Hydrolysis of proteins to small peptides in the presence of ATP and magnesium. alpha-casein is the usual test substrate. In the absence of ATP, only oligopeptides shorter than five residues are hydrolyzed (such as succinyl-Leu-Tyr-|-NHMec, and Leu-Tyr-Leu-|-Tyr-Trp, in which cleavage of the -Tyr-|-Leu- and -Tyr-|-Trp bonds also occurs).. In terms of biological role, cleaves peptides in various proteins in a process that requires ATP hydrolysis. Has a chymotrypsin-like activity. Plays a major role in the degradation of misfolded proteins. In Limosilactobacillus reuteri (strain DSM 20016) (Lactobacillus reuteri), this protein is ATP-dependent Clp protease proteolytic subunit.